A 1161-amino-acid polypeptide reads, in one-letter code: Lysine-specific demethylase 2A (1161 aa).

At serine 28 the chain carries Phosphoserine. Residues 148–316 (FSHTRLENMV…MQLKIYSIED (169 aa)) form the JmjC domain. Threonine 209 contacts substrate. The Fe cation site is built by histidine 212 and aspartate 214. Lysine 229 is a substrate binding site. Histidine 284 lines the Fe cation pocket. Serine 390 and serine 394 each carry phosphoserine. A compositionally biased stretch (low complexity) spans 419–433 (KTLSGDSSSDSTRGS). The segment at 419–445 (KTLSGDSSSDSTRGSHNGQVWDPQCSP) is disordered. Serine 444 is subject to Phosphoserine. Lysine 505 is covalently cross-linked (Glycyl lysine isopeptide (Lys-Gly) (interchain with G-Cter in SUMO2)). The disordered stretch occupies residues 532–557 (VPTIPITKPHTMKPAPRLTPVRPAAA). Phosphothreonine is present on threonine 550. A Phosphoserine modification is found at serine 558. The CXXC-type zinc-finger motif lies at 564 to 610 (ARRRRVRCRKCKACVQGECGVCHYCRDMKKFGGPGRMKQSCVLRQCL). Residues cysteine 571, cysteine 574, cysteine 577, cysteine 582, cysteine 585, cysteine 588, cysteine 604, cysteine 609, cysteine 620, and cysteine 623 each coordinate Zn(2+). Residues 617-678 (SVTCSLCGEV…CWECPKCYQE (62 aa)) form a PHD-type zinc finger. Threonine 632 carries the post-translational modification Phosphothreonine. Residues cysteine 642, cysteine 645, histidine 650, cysteine 653, cysteine 672, and cysteine 675 each coordinate Zn(2+). Position 692 is a phosphoserine (serine 692). Residues 705 to 789 (LRSCEEPLTP…PSGKKELSEV (85 aa)) are disordered. A Phosphothreonine modification is found at threonine 713. Serine 718 and serine 731 each carry phosphoserine. Basic and acidic residues-rich tracts occupy residues 746-757 (SDHHSASRDERF) and 771-789 (TMVR…LSEV). Serine 825, serine 868, and serine 882 each carry phosphoserine. The tract at residues 840 to 886 (CPARNPQHGDEEGLGGEEEEEEEEEEDDSAEEGGAARLNGRGSWAQD) is disordered. A compositionally biased stretch (acidic residues) spans 851–870 (EGLGGEEEEEEEEEEDDSAE). One can recognise an F-box domain in the interval 888 to 935 (DESWMQREVWMSVFRYLSRKELCECMRVCKTWYKWCCDKRLWTKIDLS). LRR repeat units lie at residues 960–981 (WTNI…LKDL) and 983–1009 (LAGC…DLRW). Arginine 1019 carries the post-translational modification ADP-ribosylarginine. LRR repeat units lie at residues 1047–1072 (GLDI…DLSH), 1073–1102 (CSHL…NMAG), 1103–1127 (CNKL…DLRG), and 1128–1155 (CKQI…SDEK).

The protein belongs to the JHDM1 histone demethylase family. As to quaternary structure, part of a SCF (SKP1-cullin-F-box) protein ligase complex. Interacts with CBX5/HP1A; the interaction promotes CBX5 localization to chromatin. The SKP1-KDM2A complex interacts with UBB. Requires Fe(2+) as cofactor. In terms of processing, mono-ADP-ribosylated at Arg-1019 in response to DNA damage, leading to displacement from chromatin, resulting in increased dimethylation of histone H3 at 'Lys-36'.

The protein localises to the nucleus. The protein resides in the nucleoplasm. It localises to the chromosome. The enzyme catalyses N(6),N(6)-dimethyl-L-lysyl(36)-[histone H3] + 2 2-oxoglutarate + 2 O2 = L-lysyl(36)-[histone H3] + 2 formaldehyde + 2 succinate + 2 CO2. Its function is as follows. Histone demethylase that specifically demethylates 'Lys-36' of histone H3, thereby playing a central role in histone code. Preferentially demethylates dimethylated H3 'Lys-36' residue while it has weak or no activity for mono- and tri-methylated H3 'Lys-36'. May also recognize and bind to some phosphorylated proteins and promote their ubiquitination and degradation. Required to maintain the heterochromatic state. Associates with centromeres and represses transcription of small non-coding RNAs that are encoded by the clusters of satellite repeats at the centromere. Required to sustain centromeric integrity and genomic stability, particularly during mitosis. Regulates circadian gene expression by repressing the transcriptional activator activity of CLOCK-BMAL1 heterodimer and RORA in a catalytically-independent manner. This is Lysine-specific demethylase 2A (Kdm2a) from Mus musculus (Mouse).